The sequence spans 650 residues: Protein ANTI-SILENCING 1 (650 aa).

The 132-residue stretch at 38–169 (DEYRLYDCVL…VGSCKVVDTI (132 aa)) folds into the BAH domain. Disordered regions lie at residues 202 to 223 (NGKS…GSVR), 229 to 248 (AFES…EKEK), 257 to 359 (KSTL…QKLD), and 425 to 448 (VTEK…ADDN). Composition is skewed to basic and acidic residues over residues 259–270 (TLAEERSNKDSG) and 277–287 (NGKDQESEVKK). The segment covering 302-315 (SNSFEASGSRTIHS) has biased composition (polar residues). 2 stretches are compositionally biased toward basic and acidic residues: residues 348–358 (LDDRPLKKQKL) and 438–448 (RAEDKMSADDN). One can recognise an RRM domain in the interval 486 to 569 (TVVLLQNLDP…RPLVASFAKI (84 aa)).

In terms of assembly, component of the ASI1-AIPP1-EDM2 (AAE) RNA regulatory complex composed of at least AIPP1/EDM3, ASI1 and EDM2 and may contain CPL2, AIPP2 and AIPP3/BDT1. Binds directly to AIPP1/EDM3 and AIPP2.

Collaboratively with AIPP1/EDM3 and EDM2, the AAE complex regulates alternative RNA processing (e.g. alternative splicing) and epigenetic silencing (e.g. H3K9me2) of intronic heterochromatin-containing genes as well as genic heterochromatin-containing genes by promoting distal 3' polyadenylation; may associate with intronic heterochromatin and bind gene transcripts to modulate polyadenylation. Required to prevent promoter DNA hypermethylation and transcriptional silencing of some transgenes. Plays a similar role to that of the histone H3K9 demethylase JMJ25/IBM1 in preventing CHG methylation in the bodies of numerous genes. RNA-binding protein that ensures the proper expression of JMJ25/IBM1 full-length transcript by associating with an intronic heterochromatic repeat element of JMJ25/IBM1. Also modulates transposable elements (TE) expression. Contributes to a unique mechanism to deal with the collateral effect of silencing intronic repeat elements. The sequence is that of Protein ANTI-SILENCING 1 from Arabidopsis thaliana (Mouse-ear cress).